A 412-amino-acid chain; its full sequence is Gamma-glutamyl phosphate reductase (412 aa).

This sequence belongs to the gamma-glutamyl phosphate reductase family.

It is found in the cytoplasm. The catalysed reaction is L-glutamate 5-semialdehyde + phosphate + NADP(+) = L-glutamyl 5-phosphate + NADPH + H(+). It functions in the pathway amino-acid biosynthesis; L-proline biosynthesis; L-glutamate 5-semialdehyde from L-glutamate: step 2/2. Catalyzes the NADPH-dependent reduction of L-glutamate 5-phosphate into L-glutamate 5-semialdehyde and phosphate. The product spontaneously undergoes cyclization to form 1-pyrroline-5-carboxylate. In Actinobacillus pleuropneumoniae serotype 5b (strain L20), this protein is Gamma-glutamyl phosphate reductase.